Consider the following 313-residue polypeptide: MTLQQIKEIYLRPLTELILKALEIHNKNFGNDIELCSLKSIKTGTCPEDCKYCPQSGHYNTSIEKHKLLDKDSILAEAKNAKDAGSKRFCMGAAWKHIPKKDFDQVAEIITEVKNLGLETCVTLGSINADEATKLKQAGLDYYNHNLDTSREFYPEIITTRKFEERIETIRNVANANINVCCGGILGMGESLDDRFNLLLELLQLPAAPKSIPINTLIPVKGTPLGDKYTNAQIDSFELVRFIATTRILFPQARLRLSAGRENMSLETQTLCFLAGINSIFYGNKLLTENNATVNSDNFLLAKLGLKSNAELC.

One can recognise a Radical SAM core domain in the interval 28 to 258; the sequence is NFGNDIELCS…LFPQARLRLS (231 aa). Residues cysteine 46, cysteine 50, and cysteine 53 each contribute to the [4Fe-4S] cluster site. [2Fe-2S] cluster-binding residues include cysteine 90, cysteine 121, cysteine 181, and arginine 256.

This sequence belongs to the radical SAM superfamily. Biotin synthase family. As to quaternary structure, homodimer. Requires [4Fe-4S] cluster as cofactor. The cofactor is [2Fe-2S] cluster.

The catalysed reaction is (4R,5S)-dethiobiotin + (sulfur carrier)-SH + 2 reduced [2Fe-2S]-[ferredoxin] + 2 S-adenosyl-L-methionine = (sulfur carrier)-H + biotin + 2 5'-deoxyadenosine + 2 L-methionine + 2 oxidized [2Fe-2S]-[ferredoxin]. Its pathway is cofactor biosynthesis; biotin biosynthesis; biotin from 7,8-diaminononanoate: step 2/2. Functionally, catalyzes the conversion of dethiobiotin (DTB) to biotin by the insertion of a sulfur atom into dethiobiotin via a radical-based mechanism. The protein is Biotin synthase of Francisella tularensis subsp. holarctica (strain FTNF002-00 / FTA).